Consider the following 149-residue polypeptide: SsrA-binding protein (149 aa).

Residues 121–149 (GKKQHDKRADELDKDSKREAQRAMKERQR) form a disordered region. Residues 127–149 (KRADELDKDSKREAQRAMKERQR) show a composition bias toward basic and acidic residues.

Belongs to the SmpB family.

It is found in the cytoplasm. Required for rescue of stalled ribosomes mediated by trans-translation. Binds to transfer-messenger RNA (tmRNA), required for stable association of tmRNA with ribosomes. tmRNA and SmpB together mimic tRNA shape, replacing the anticodon stem-loop with SmpB. tmRNA is encoded by the ssrA gene; the 2 termini fold to resemble tRNA(Ala) and it encodes a 'tag peptide', a short internal open reading frame. During trans-translation Ala-aminoacylated tmRNA acts like a tRNA, entering the A-site of stalled ribosomes, displacing the stalled mRNA. The ribosome then switches to translate the ORF on the tmRNA; the nascent peptide is terminated with the 'tag peptide' encoded by the tmRNA and targeted for degradation. The ribosome is freed to recommence translation, which seems to be the essential function of trans-translation. The polypeptide is SsrA-binding protein (Dechloromonas aromatica (strain RCB)).